The following is a 173-amino-acid chain: Large ribosomal subunit protein uL10 (173 aa).

It belongs to the universal ribosomal protein uL10 family. As to quaternary structure, part of the ribosomal stalk of the 50S ribosomal subunit. The N-terminus interacts with L11 and the large rRNA to form the base of the stalk. The C-terminus forms an elongated spine to which L12 dimers bind in a sequential fashion forming a multimeric L10(L12)X complex.

Its function is as follows. Forms part of the ribosomal stalk, playing a central role in the interaction of the ribosome with GTP-bound translation factors. This chain is Large ribosomal subunit protein uL10, found in Chlorobaculum parvum (strain DSM 263 / NCIMB 8327) (Chlorobium vibrioforme subsp. thiosulfatophilum).